Consider the following 51-residue polypeptide: Bacteriochlorophyll e-binding protein (51 aa).

Position 25 (His-25) interacts with a bacteriochlorophyll e.

It belongs to the BChl C/E-binding protein family.

The protein resides in the chlorosome. It is found in the chlorosome envelope. Its function is as follows. Component of the photosynthetic apparatus. The light harvesting B740 complex binds bacteriochlorophyll e. The polypeptide is Bacteriochlorophyll e-binding protein (csmA) (Chlorobium phaeovibrioides).